A 428-amino-acid chain; its full sequence is Trigger factor (428 aa).

A PPIase FKBP-type domain is found at 163 to 248 (GDTVVIDFEG…LHEIKTKQLP (86 aa)).

The protein belongs to the FKBP-type PPIase family. Tig subfamily.

The protein localises to the cytoplasm. The enzyme catalyses [protein]-peptidylproline (omega=180) = [protein]-peptidylproline (omega=0). Functionally, involved in protein export. Acts as a chaperone by maintaining the newly synthesized protein in an open conformation. Functions as a peptidyl-prolyl cis-trans isomerase. The protein is Trigger factor of Anoxybacillus flavithermus (strain DSM 21510 / WK1).